We begin with the raw amino-acid sequence, 373 residues long: CXADR-like membrane protein (373 aa).

The signal sequence occupies residues 1 to 18; sequence MSLLLLLLLVSYYVGTLG. Ig-like C2-type domains lie at 19-127 and 135-224; these read THTE…VILK and PKCE…VRVT. The Extracellular segment spans residues 19–235; it reads THTEIKRVAE…QYVQSIGMVA (217 aa). 2 cysteine pairs are disulfide-bonded: C35-C111 and C153-C208. N-linked (GlcNAc...) asparagine glycans are attached at residues N74 and N197. A helical transmembrane segment spans residues 236 to 256; it reads GAVTGIVAGALLIFLLVWLLI. Residues 257–373 are Cytoplasmic-facing; sequence RRKDKERYEE…PSQSRAFQTV (117 aa). Residues 264–281 show a composition bias toward basic and acidic residues; it reads YEEEERPNEIREDAEAPK. Residues 264–373 are disordered; that stretch reads YEEEERPNEI…PSQSRAFQTV (110 aa). Positions 288–314 are enriched in low complexity; that stretch reads SSSSSGSRSSRSGSSSTRSTANSASRS. Over residues 355-373 the composition is skewed to polar residues; it reads KAETTPSMIPSQSRAFQTV.

Predominantly expressed in epithelial cells within different tissues and in the white adipose tissue. Expressed at high levels in small intestine and placenta, at intermediate levels in the heart, skeletal muscle, colon, spleen, kidney and lung and at low levels in the liver and peripheral blood leukocytes. Highly abundant in the intestine during embryo and fetal development (at protein level).

Its subcellular location is the cell junction. The protein localises to the tight junction. It localises to the cell membrane. In terms of biological role, may be involved in the cell-cell adhesion. May play a role in adipocyte differentiation and development of obesity. Is required for normal small intestine development. The chain is CXADR-like membrane protein (CLMP) from Homo sapiens (Human).